Consider the following 227-residue polypeptide: Urease accessory protein UreF (227 aa).

It belongs to the UreF family. UreD, UreF and UreG form a complex that acts as a GTP-hydrolysis-dependent molecular chaperone, activating the urease apoprotein by helping to assemble the nickel containing metallocenter of UreC. The UreE protein probably delivers the nickel.

The protein resides in the cytoplasm. Its function is as follows. Required for maturation of urease via the functional incorporation of the urease nickel metallocenter. In Bacillus sp. (strain TB-90), this protein is Urease accessory protein UreF.